Here is a 693-residue protein sequence, read N- to C-terminus: Elongation factor G (693 aa).

Residues 8 to 282 (KNTRNIGIMA…AVIDYLPSPL (275 aa)) form the tr-type G domain. GTP-binding positions include 17-24 (AHIDAGKT), 81-85 (DTPGH), and 135-138 (NKMD).

The protein belongs to the TRAFAC class translation factor GTPase superfamily. Classic translation factor GTPase family. EF-G/EF-2 subfamily.

The protein resides in the cytoplasm. Functionally, catalyzes the GTP-dependent ribosomal translocation step during translation elongation. During this step, the ribosome changes from the pre-translocational (PRE) to the post-translocational (POST) state as the newly formed A-site-bound peptidyl-tRNA and P-site-bound deacylated tRNA move to the P and E sites, respectively. Catalyzes the coordinated movement of the two tRNA molecules, the mRNA and conformational changes in the ribosome. In Staphylococcus epidermidis (strain ATCC 35984 / DSM 28319 / BCRC 17069 / CCUG 31568 / BM 3577 / RP62A), this protein is Elongation factor G.